The primary structure comprises 308 residues: Apolipoprotein E (308 aa).

An N-terminal signal peptide occupies residues 1–18; that stretch reads MKFLWAALVVTLLAGCQA. Tandem repeats lie at residues 75 to 96, 97 to 118, 119 to 140, 141 to 162, 163 to 184, 185 to 206, 207 to 224, and 225 to 246. Residues 75–246 are 8 X 22 AA approximate tandem repeats; it reads LLIEETMKEV…RLDDVRDQME (172 aa). Positions 153–163 are LDL and other lipoprotein receptors binding; it reads HLRKLRKRLLR. Residue 157-160 coordinates heparin; it reads LRKR. The tract at residues 205–281 is lipid-binding and lipoprotein association; sequence AIPPSQQLRE…SWFEPLVQDM (77 aa). 220–227 lines the heparin pocket; it reads GQKVRGRL. The segment at 257 to 308 is homooligomerization; the sequence is SQVRLQAEAFQTRLKSWFEPLVQDMQRQWASLVEKVQSSLGISPSTKPSKTK. The specificity for association with VLDL stretch occupies residues 269–281; sequence RLKSWFEPLVQDM.

The protein belongs to the apolipoprotein A1/A4/E family. In terms of assembly, homotetramer. May interact with ABCA1; functionally associated with ABCA1 in the biogenesis of HDLs. May interact with APP/A4 amyloid-beta peptide; the interaction is extremely stable in vitro but its physiological significance is unclear. May interact with MAPT. May interact with MAP2. In the cerebrospinal fluid, interacts with secreted SORL1. Interacts with PMEL; this allows the loading of PMEL luminal fragment on ILVs to induce fibril nucleation. Post-translationally, APOE exists as multiple glycosylated and sialylated glycoforms within cells and in plasma. The extent of glycosylation and sialylation are tissue and context specific. Glycated in plasma VLDL. In terms of processing, phosphorylated by FAM20C in the extracellular medium.

It is found in the secreted. The protein localises to the extracellular space. Its subcellular location is the extracellular matrix. The protein resides in the extracellular vesicle. It localises to the endosome. It is found in the multivesicular body. APOE is an apolipoprotein, a protein associating with lipid particles, that mainly functions in lipoprotein-mediated lipid transport between organs via the plasma and interstitial fluids. APOE is a core component of plasma lipoproteins and is involved in their production, conversion and clearance. Apolipoproteins are amphipathic molecules that interact both with lipids of the lipoprotein particle core and the aqueous environment of the plasma. As such, APOE associates with chylomicrons, chylomicron remnants, very low density lipoproteins (VLDL) and intermediate density lipoproteins (IDL) but shows a preferential binding to high-density lipoproteins (HDL). It also binds a wide range of cellular receptors including the LDL receptor/LDLR and the very low-density lipoprotein receptor/VLDLR that mediate the cellular uptake of the APOE-containing lipoprotein particles. Finally, APOE also has a heparin-binding activity and binds heparan-sulfate proteoglycans on the surface of cells, a property that supports the capture and the receptor-mediated uptake of APOE-containing lipoproteins by cells. This chain is Apolipoprotein E (APOE), found in Pteropus alecto (Black flying fox).